The following is a 201-amino-acid chain: Small ribosomal subunit protein uS4 (201 aa).

The region spanning A92–L155 is the S4 RNA-binding domain.

The protein belongs to the universal ribosomal protein uS4 family. Part of the 30S ribosomal subunit. Contacts protein S5. The interaction surface between S4 and S5 is involved in control of translational fidelity.

Its function is as follows. One of the primary rRNA binding proteins, it binds directly to 16S rRNA where it nucleates assembly of the body of the 30S subunit. With S5 and S12 plays an important role in translational accuracy. This is Small ribosomal subunit protein uS4 from Phocaeicola vulgatus (strain ATCC 8482 / DSM 1447 / JCM 5826 / CCUG 4940 / NBRC 14291 / NCTC 11154) (Bacteroides vulgatus).